A 546-amino-acid polypeptide reads, in one-letter code: Thermosome subunit beta (546 aa).

This sequence belongs to the TCP-1 chaperonin family. As to quaternary structure, forms a Heterooligomeric complex of two stacked eight-membered rings.

In terms of biological role, molecular chaperone; binds unfolded polypeptides in vitro, and has a weak ATPase activity. In Thermococcus kodakarensis (strain ATCC BAA-918 / JCM 12380 / KOD1) (Pyrococcus kodakaraensis (strain KOD1)), this protein is Thermosome subunit beta (thsB).